The primary structure comprises 89 residues: Small ribosomal subunit protein bS16 (89 aa).

It belongs to the bacterial ribosomal protein bS16 family.

This Chloroflexus aggregans (strain MD-66 / DSM 9485) protein is Small ribosomal subunit protein bS16.